Reading from the N-terminus, the 198-residue chain is Recombination protein RecR (198 aa).

Residues 56–71 form a C4-type zinc finger; it reads CDTCGNVDTQNPCGIC. In terms of domain architecture, Toprim spans 79–174; sequence KSICVVEDVA…RITQLAHGLP (96 aa).

This sequence belongs to the RecR family.

In terms of biological role, may play a role in DNA repair. It seems to be involved in an RecBC-independent recombinational process of DNA repair. It may act with RecF and RecO. This Erythrobacter litoralis (strain HTCC2594) protein is Recombination protein RecR.